The primary structure comprises 440 residues: Protein translocase subunit SecY (440 aa).

10 helical membrane passes run 17–37 (IFFT…PSPG), 74–94 (IFAI…LLTV), 116–135 (YTRY…IVAL), 155–175 (FFDL…VMWM), 178–198 (LITE…GIAT), 213–233 (GVVF…VVFV), 270–290 (VIPV…TQIV), 316–336 (WQYI…YVSV), 374–394 (LLFV…IMLD), and 403–423 (GATP…LTTV).

This sequence belongs to the SecY/SEC61-alpha family. As to quaternary structure, component of the Sec protein translocase complex. Heterotrimer consisting of SecY, SecE and SecG subunits. The heterotrimers can form oligomers, although 1 heterotrimer is thought to be able to translocate proteins. Interacts with the ribosome. Interacts with SecDF, and other proteins may be involved. Interacts with SecA.

It localises to the cell membrane. Its function is as follows. The central subunit of the protein translocation channel SecYEG. Consists of two halves formed by TMs 1-5 and 6-10. These two domains form a lateral gate at the front which open onto the bilayer between TMs 2 and 7, and are clamped together by SecE at the back. The channel is closed by both a pore ring composed of hydrophobic SecY resides and a short helix (helix 2A) on the extracellular side of the membrane which forms a plug. The plug probably moves laterally to allow the channel to open. The ring and the pore may move independently. This chain is Protein translocase subunit SecY, found in Corynebacterium glutamicum (strain ATCC 13032 / DSM 20300 / JCM 1318 / BCRC 11384 / CCUG 27702 / LMG 3730 / NBRC 12168 / NCIMB 10025 / NRRL B-2784 / 534).